Reading from the N-terminus, the 221-residue chain is Queuosine precursor transporter (221 aa).

Topologically, residues 1-12 (MNVFSQTQRYKA) are cytoplasmic. Residues 13–33 (LFWLSLFHLLVITSSNYLVQL) traverse the membrane as a helical segment. Residue Pro-34 is a topological domain, periplasmic. The helical transmembrane segment at 35 to 55 (VSILGFHTTWGAFSFPFIFLA) threads the bilayer. Residues 56-70 (TDLTVRIFGAPLARR) lie on the Cytoplasmic side of the membrane. A helical transmembrane segment spans residues 71 to 91 (IIFAVMIPALLISYVISSLFY). Over 92 to 97 (MGSWQG) the chain is Periplasmic. The chain crosses the membrane as a helical span at residues 98-118 (FGALAHFNLFVARIATASFMA). At 119 to 143 (YALGQILDVHVFNRLRQSRRWWLAP) the chain is on the cytoplasmic side. A helical membrane pass occupies residues 144–164 (TASTLFGNVSDTLAFFFIAFW). Residues 165 to 184 (RSPDAFMAEHWMEIALVDYC) lie on the Periplasmic side of the membrane. The chain crosses the membrane as a helical span at residues 185-205 (FKVLISIVFFLPMYGVLLNML). Residues 206–221 (LKRLADKSEINALQAS) lie on the Cytoplasmic side of the membrane.

Belongs to the vitamin uptake transporter (VUT/ECF) (TC 2.A.88) family. Q precursor transporter subfamily.

The protein resides in the cell inner membrane. In terms of biological role, involved in the import of queuosine (Q) precursors, required for Q precursor salvage. Transports 7-cyano-7-deazaguanine (preQ(0)) and 7-aminomethyl-7-deazaguanine (preQ(1)), with a preference for preQ(0). The protein is Queuosine precursor transporter (yhhQ) of Escherichia coli (strain K12).